The primary structure comprises 32 residues: Small ribosomal subunit protein uS19 (32 aa).

This sequence belongs to the universal ribosomal protein uS19 family.

Its function is as follows. Protein S19 forms a complex with S13 that binds strongly to the 16S ribosomal RNA. This chain is Small ribosomal subunit protein uS19 (rpsS), found in Yersinia enterocolitica.